The following is a 340-amino-acid chain: Heat-inducible transcription repressor HrcA (340 aa).

This sequence belongs to the HrcA family.

In terms of biological role, negative regulator of class I heat shock genes (grpE-dnaK-dnaJ and groELS operons). Prevents heat-shock induction of these operons. The sequence is that of Heat-inducible transcription repressor HrcA from Mycoplasma mycoides subsp. mycoides SC (strain CCUG 32753 / NCTC 10114 / PG1).